A 458-amino-acid polypeptide reads, in one-letter code: Sushi repeat-containing protein SRPX2 (458 aa).

The N-terminal stretch at 1–18 is a signal peptide; it reads MEASITVLLFAFTKVASS. 3 consecutive Sushi domains span residues 62-112, 113-171, and 255-314; these read ATCY…HCRR, IQCH…VCVD, and RRCP…TCTP. 4 disulfides stabilise this stretch: C64-C98, C84-C110, C115-C156, and C142-C169. Residues 170–254 enclose the HYR domain; it reads VDLDPPKIQC…SCKFIVKVQV (85 aa). 2 disulfides stabilise this stretch: C257/C299 and C285/C312.

As to quaternary structure, forms homooligomers.

It is found in the secreted. It localises to the cytoplasm. The protein localises to the cell surface. The protein resides in the synapse. Functionally, may play a role in angiogenesis, synapse formation, cellular migration and adhesion. The protein is Sushi repeat-containing protein SRPX2 (srpx2) of Xenopus laevis (African clawed frog).